The following is a 263-amino-acid chain: Protein maestro (263 aa).

The segment at 1-21 (MDQTPRRMLGQPLSSPATQPK) is disordered. An HEAT repeat occupies 128-163 (SFFIDITLQTRTLLDDENDSLRYSAFVLFGQLADLA).

It is found in the nucleus. The protein localises to the nucleolus. This Bos taurus (Bovine) protein is Protein maestro (MRO).